The primary structure comprises 520 residues: Sodium-dependent dicarboxylate transporter SdcS (520 aa).

Helical transmembrane passes span 30 to 50 (TGQLIGLILGPLLFLLTLLFF), 55 to 75 (LPWKGVYVLAITLWIATWWIT), 77 to 97 (AIPIAATSLLPIVLLPLGHIL), 104 to 124 (SEYGNDIIFLFLGGFILAIAM), 160 to 180 (SMFVSNTAAVMIMIPIGLAII), 207 to 227 (IGYAGTIGGLGTLIGTPPLII), 242 to 262 (FAKWMIVGIPTVIVLLGITWL), 298 to 318 (KVVQTIFVLASLLWITREFLL), 323 to 343 (VTSSVADGTIAIFISILLFII), 362 to 382 (ELPWGVLILFGGGLALAKGIS), 399 to 419 (GVSPILIVIVITIFVLFLTEV), 428 to 448 (MILPILATLSVAVGVHPLLLM), 452 to 472 (AMAANCAYMLPVGTPPNAIIF), and 491 to 511 (LISAIIIILVVYYIMPIVLGI).

Belongs to the SLC13A/DASS transporter (TC 2.A.47) family. NADC subfamily.

It localises to the cell membrane. In terms of biological role, mediates the transport of the dicarboxylates fumarate, malate, and succinate across the cytoplasmic membrane via a Na(+)-electrochemical gradient. This Staphylococcus aureus (strain MRSA252) protein is Sodium-dependent dicarboxylate transporter SdcS (sdcS).